The chain runs to 379 residues: Programmed cell death protein 2-like (379 aa).

The chain is Programmed cell death protein 2-like (PDCD2L) from Gallus gallus (Chicken).